We begin with the raw amino-acid sequence, 204 residues long: Guanylate kinase (204 aa).

Residues 3 to 181 (GTLYIVSASS…AVSEMSAIFT (179 aa)) form the Guanylate kinase-like domain. Position 10–17 (10–17 (ASSGTGKS)) interacts with ATP.

It belongs to the guanylate kinase family.

It localises to the cytoplasm. The enzyme catalyses GMP + ATP = GDP + ADP. In terms of biological role, essential for recycling GMP and indirectly, cGMP. The sequence is that of Guanylate kinase from Xylella fastidiosa (strain Temecula1 / ATCC 700964).